The following is a 627-amino-acid chain: MALVSIAPLASKSCLHKSLSSSAHELKTICRTIPTLGMSRRGKSATPSMSMSLTTTVSDDGVQRRMGDFHSNLWNDDFIQSLSTSYGEPSYRERAERLIGEVKKMFNSMSSEDGELISPHNDLIQRVWMVDSVERLGIERHFKNEIKSALDYVYSYWSEKGIGCGRESVVADLNSTALGFRTLRLHGYAVSADVLNLFKDQNGQFACSPSQTEEEIRSVLNLYRASLIAFPGEKVMEEAEIFSAKYLEESLQKISVSSLSQEIRDVLEYGWHTYLPRMEARNHIDVFGQDTQNSKSCINTEKLLELAKLEFNIFHSLQKRELEYLVRWWKDSGSPQMTFCRHRHVEYYTLASCIAFEPQHSGFRLGFAKACHIITILDDMYDTFGTVDELELFTAAMKRWDPSAADCLPEYMKGVYLILYDTVNEMSREAEKAQGRDTLDYARRAWDDYLDSYMQEAKWIATGYLPTFAEYYENGKVSSGHRTSALQPILTMDIPFPPHILKEVDFPSKLNDLACAILRLRGDTRCYKADRARGEEASSISCYMKDNPGATEEDALDHINAMISDVIRGLNWELLNPNSSVPISSKKHVFDISRAFHYGYKYRDGYSVANIETKSLVKRTVIDPVTL.

The transit peptide at 1–36 directs the protein to the chloroplast; the sequence is MALVSIAPLASKSCLHKSLSSSAHELKTICRTIPTL. Aspartate 378, aspartate 382, and aspartate 530 together coordinate Mg(2+). The short motif at 378–382 is the DDXXD motif element; sequence DDMYD.

It belongs to the terpene synthase family. Tpsd subfamily. The cofactor is Mg(2+). Mn(2+) serves as cofactor.

The protein resides in the plastid. Its subcellular location is the chloroplast. The enzyme catalyses (2E)-geranyl diphosphate = (1S,5S)-beta-pinene + diphosphate. It catalyses the reaction (2E)-geranyl diphosphate = (1S,5S)-alpha-pinene + diphosphate. It participates in terpene metabolism; oleoresin biosynthesis. Its function is as follows. Terpene synthase (TPS) involved in the biosynthesis of monoterpene natural products included in conifer oleoresin secretions and volatile emissions; these compounds contribute to biotic and abiotic stress defense against herbivores and pathogens. Catalyzes the conversion of (2E)-geranyl diphosphate (GPP) to (1S,5S)-beta-pinene. The sequence is that of (-)-alpha-pinene synthase 1, chloroplastic from Picea sitchensis (Sitka spruce).